Consider the following 344-residue polypeptide: G-protein coupled receptor str-217 (344 aa).

Over 1–10 (MLLFQKTLSR) the chain is Extracellular. Residues 11-31 (VAAPISVAANLILILLIIFKS) traverse the membrane as a helical segment. At 32–39 (PAQMGNYK) the chain is on the cytoplasmic side. Residues 40–60 (YLLIGLSIFEMSYAVLDVVSE) form a helical membrane-spanning segment. At 61–88 (TTVLSIKKSFVVVVPYKDRSFGQETAMD) the chain is on the extracellular side. The helical transmembrane segment at 89-109 (INLIYCGFFGFSMGMFVVIFA) threads the bilayer. Topologically, residues 110–128 (YRSFLTTGNTILRKFEGFK) are cytoplasmic. The helical transmembrane segment at 129-149 (IISWFAYPLFYAIVWILVAWG) threads the bilayer. Over 150-195 (PLASFPEMDIVVRPFLLDELNMTVDEVAYTGRLFYSTIDNSLRYSA) the chain is Extracellular. An N-linked (GlcNAc...) asparagine glycan is attached at N170. A helical transmembrane segment spans residues 196–216 (ILTGVLQWVLTASSLFLVIFF). The Cytoplasmic segment spans residues 217-256 (GLRCYFHYGKLVQLTDVQSIRLRQLQNQLFLALVCQATVP). The helical transmembrane segment at 257 to 277 (LILMHIPVTILYTCCVLNIVF) threads the bilayer. Topologically, residues 278–279 (NP) are extracellular. The chain crosses the membrane as a helical span at residues 280–300 (FSVATTIALFPAIDPLPTIFI). At 301–344 (VKNYRVALFEFVCPSCLCWSETLKHMGSNRITSYRSNTVNALSM) the chain is on the cytoplasmic side.

Belongs to the nematode receptor-like protein str family. As to expression, expressed in the ADL chemosensory neurons.

Its subcellular location is the cell membrane. Its function is as follows. Probable G-protein coupled receptor. The polypeptide is G-protein coupled receptor str-217 (Caenorhabditis elegans).